The chain runs to 313 residues: MIHLPQGSFTQGLIVGQLLTLAIIYVFLRFFLFCSPIPKSVANSPKQTGNETPDETPSTPLSNNKKRYKKPLTILEPHILNLLYDVNEHEPESLDWFNVLIAQALIQFRYDACSNDVALRKLETVLNKGAQDKSMVDHIYVRDLSLGDGFPVFSHCRVLPHQHNSSQLRAEMLVSLTDNINCTVDTKLLLNFPKPAFATLPLSITVRICKFVGKIMIYFSPSNGAGQPAYMNLSFDPNFVISLQVSSLVGARSKLQDIPKITQLIESRIRQWFTNRCVSPQFQQIAIPNLWPTSAKEGHARSHAPQEESSNED.

Residues 1–12 (MIHLPQGSFTQG) are Lumenal-facing. Residues 13-33 (LIVGQLLTLAIIYVFLRFFLF) form a helical membrane-spanning segment. At 34-313 (CSPIPKSVAN…APQEESSNED (280 aa)) the chain is on the cytoplasmic side. Positions 42 to 63 (ANSPKQTGNETPDETPSTPLSN) are enriched in polar residues. A disordered region spans residues 42–65 (ANSPKQTGNETPDETPSTPLSNNK). Positions 90 to 288 (EPESLDWFNV…SPQFQQIAIP (199 aa)) constitute an SMP-LTD domain.

This sequence belongs to the MMM1 family. In terms of assembly, homodimer. Component of the ER-mitochondria encounter structure (ERMES) or MDM complex, composed of mmm1, mdm10, mdm12 and mdm34. A mmm1 homodimer associates with one molecule of mdm12 on each side in a pairwise head-to-tail manner, and the SMP-LTD domains of mmm1 and mdm12 generate a continuous hydrophobic tunnel for phospholipid trafficking.

The protein resides in the endoplasmic reticulum membrane. Functionally, component of the ERMES/MDM complex, which serves as a molecular tether to connect the endoplasmic reticulum (ER) and mitochondria. Components of this complex are involved in the control of mitochondrial shape and protein biogenesis, and function in nonvesicular lipid trafficking between the ER and mitochondria. The mdm12-mmm1 subcomplex functions in the major beta-barrel assembly pathway that is responsible for biogenesis of all outer membrane beta-barrel proteins, and acts in a late step after the SAM complex. The mdm10-mdm12-mmm1 subcomplex further acts in the TOM40-specific pathway after the action of the mdm12-mmm1 complex. Essential for establishing and maintaining the structure of mitochondria and maintenance of mtDNA nucleoids. This Schizosaccharomyces pombe (strain 972 / ATCC 24843) (Fission yeast) protein is Maintenance of mitochondrial morphology protein 1.